The following is a 182-amino-acid chain: Transcription termination/antitermination protein NusG (182 aa).

The protein belongs to the NusG family.

Functionally, participates in transcription elongation, termination and antitermination. This is Transcription termination/antitermination protein NusG from Chlamydia muridarum (strain MoPn / Nigg).